We begin with the raw amino-acid sequence, 389 residues long: Phospho-N-acetylmuramoyl-pentapeptide-transferase (389 aa).

10 helical membrane passes run Arg-25 to Ile-45, Thr-73 to Leu-93, Phe-97 to Tyr-117, Phe-135 to Ala-155, Ile-190 to Ala-210, Gly-222 to Met-242, Gly-258 to Trp-278, Val-286 to Ile-306, Ile-311 to Val-331, and Gln-366 to Leu-386.

Belongs to the glycosyltransferase 4 family. MraY subfamily. It depends on Mg(2+) as a cofactor.

The protein resides in the cell inner membrane. The catalysed reaction is UDP-N-acetyl-alpha-D-muramoyl-L-alanyl-gamma-D-glutamyl-meso-2,6-diaminopimeloyl-D-alanyl-D-alanine + di-trans,octa-cis-undecaprenyl phosphate = di-trans,octa-cis-undecaprenyl diphospho-N-acetyl-alpha-D-muramoyl-L-alanyl-D-glutamyl-meso-2,6-diaminopimeloyl-D-alanyl-D-alanine + UMP. It participates in cell wall biogenesis; peptidoglycan biosynthesis. Catalyzes the initial step of the lipid cycle reactions in the biosynthesis of the cell wall peptidoglycan: transfers peptidoglycan precursor phospho-MurNAc-pentapeptide from UDP-MurNAc-pentapeptide onto the lipid carrier undecaprenyl phosphate, yielding undecaprenyl-pyrophosphoryl-MurNAc-pentapeptide, known as lipid I. The chain is Phospho-N-acetylmuramoyl-pentapeptide-transferase from Burkholderia cenocepacia (strain HI2424).